The primary structure comprises 272 residues: Putative pyruvate, phosphate dikinase regulatory protein (272 aa).

153-160 (GVSRTSKT) is an ADP binding site.

The protein belongs to the pyruvate, phosphate/water dikinase regulatory protein family. PDRP subfamily.

It catalyses the reaction N(tele)-phospho-L-histidyl/L-threonyl-[pyruvate, phosphate dikinase] + ADP = N(tele)-phospho-L-histidyl/O-phospho-L-threonyl-[pyruvate, phosphate dikinase] + AMP + H(+). The catalysed reaction is N(tele)-phospho-L-histidyl/O-phospho-L-threonyl-[pyruvate, phosphate dikinase] + phosphate + H(+) = N(tele)-phospho-L-histidyl/L-threonyl-[pyruvate, phosphate dikinase] + diphosphate. In terms of biological role, bifunctional serine/threonine kinase and phosphorylase involved in the regulation of the pyruvate, phosphate dikinase (PPDK) by catalyzing its phosphorylation/dephosphorylation. The protein is Putative pyruvate, phosphate dikinase regulatory protein of Streptococcus sanguinis (strain SK36).